A 491-amino-acid polypeptide reads, in one-letter code: Ketol-acid reductoisomerase (NADP(+)) (491 aa).

The KARI N-terminal Rossmann domain maps to 15–208; that stretch reads AQLGKCRFMG…GGHRAGVLES (194 aa). NADP(+) contacts are provided by residues 45–48, R68, R76, S78, and 108–110; these read CGAQ and DKQ. Residue H132 is part of the active site. Residue G158 coordinates NADP(+). 2 KARI C-terminal knotted domains span residues 209 to 344 and 345 to 484; these read SFVA…TAPQ and YEGK…MTDM. D217, E221, E389, and E393 together coordinate Mg(2+). S414 is a binding site for substrate.

Belongs to the ketol-acid reductoisomerase family. The cofactor is Mg(2+).

The catalysed reaction is (2R)-2,3-dihydroxy-3-methylbutanoate + NADP(+) = (2S)-2-acetolactate + NADPH + H(+). It catalyses the reaction (2R,3R)-2,3-dihydroxy-3-methylpentanoate + NADP(+) = (S)-2-ethyl-2-hydroxy-3-oxobutanoate + NADPH + H(+). Its pathway is amino-acid biosynthesis; L-isoleucine biosynthesis; L-isoleucine from 2-oxobutanoate: step 2/4. It functions in the pathway amino-acid biosynthesis; L-valine biosynthesis; L-valine from pyruvate: step 2/4. Its function is as follows. Involved in the biosynthesis of branched-chain amino acids (BCAA). Catalyzes an alkyl-migration followed by a ketol-acid reduction of (S)-2-acetolactate (S2AL) to yield (R)-2,3-dihydroxy-isovalerate. In the isomerase reaction, S2AL is rearranged via a Mg-dependent methyl migration to produce 3-hydroxy-3-methyl-2-ketobutyrate (HMKB). In the reductase reaction, this 2-ketoacid undergoes a metal-dependent reduction by NADPH to yield (R)-2,3-dihydroxy-isovalerate. The chain is Ketol-acid reductoisomerase (NADP(+)) from Shigella dysenteriae serotype 1 (strain Sd197).